Consider the following 338-residue polypeptide: Peptidyl-prolyl cis-trans isomerase cyp11 (338 aa).

The PPIase cyclophilin-type domain occupies 7–172; the sequence is FFDIDVDGNR…HNVMIANCGE (166 aa). The tract at residues 186–338 is disordered; sequence ASAVSDESED…RGRFKYRPTY (153 aa). Residues 208–218 show a composition bias toward acidic residues; it reads DDSSSDEDSEE. Basic residues predominate over residues 223–242; sequence RTKKKRSRKHSKKDKKKKKR. The span at 243–309 shows a compositional bias: basic and acidic residues; sequence ESSNRKRSPE…PEKRSSERRV (67 aa). Residues 329 to 338 show a composition bias toward basic residues; sequence RGRFKYRPTY.

This sequence belongs to the cyclophilin-type PPIase family.

It catalyses the reaction [protein]-peptidylproline (omega=180) = [protein]-peptidylproline (omega=0). In terms of biological role, PPIases accelerate the folding of proteins. It catalyzes the cis-trans isomerization of proline imidic peptide bonds in oligopeptides. This is Peptidyl-prolyl cis-trans isomerase cyp11 (cyp11) from Rhizopus delemar (strain RA 99-880 / ATCC MYA-4621 / FGSC 9543 / NRRL 43880) (Mucormycosis agent).